A 245-amino-acid chain; its full sequence is Endonuclease III (245 aa).

Positions 119–138 (MDKLVTLPGVGRKTANVILG) constitute a HhH domain. Residues cysteine 198, cysteine 205, cysteine 208, and cysteine 214 each contribute to the [4Fe-4S] cluster site.

It belongs to the Nth/MutY family. Requires [4Fe-4S] cluster as cofactor.

It carries out the reaction 2'-deoxyribonucleotide-(2'-deoxyribose 5'-phosphate)-2'-deoxyribonucleotide-DNA = a 3'-end 2'-deoxyribonucleotide-(2,3-dehydro-2,3-deoxyribose 5'-phosphate)-DNA + a 5'-end 5'-phospho-2'-deoxyribonucleoside-DNA + H(+). Functionally, DNA repair enzyme that has both DNA N-glycosylase activity and AP-lyase activity. The DNA N-glycosylase activity releases various damaged pyrimidines from DNA by cleaving the N-glycosidic bond, leaving an AP (apurinic/apyrimidinic) site. The AP-lyase activity cleaves the phosphodiester bond 3' to the AP site by a beta-elimination, leaving a 3'-terminal unsaturated sugar and a product with a terminal 5'-phosphate. Has a preference for oxidized pyrimidines, such as thymine glycol (prefers 5S isomers) 5,6-dihydrouracil:G, 5-hydroxyuracil:G, 5-hydroxycytosine:G and urea:A. Cleaves ssDNA containing an AP site. This chain is Endonuclease III, found in Mycobacterium tuberculosis (strain ATCC 25618 / H37Rv).